A 295-amino-acid chain; its full sequence is Aspartate carbamoyltransferase catalytic subunit (295 aa).

Carbamoyl phosphate-binding residues include Arg49 and Thr50. Lys77 contacts L-aspartate. Residues Arg99, His127, and Gln130 each coordinate carbamoyl phosphate. Residues Arg161 and Arg212 each coordinate L-aspartate. Gly251 and Pro252 together coordinate carbamoyl phosphate.

It belongs to the aspartate/ornithine carbamoyltransferase superfamily. ATCase family. In terms of assembly, heterododecamer (2C3:3R2) of six catalytic PyrB chains organized as two trimers (C3), and six regulatory PyrI chains organized as three dimers (R2).

The enzyme catalyses carbamoyl phosphate + L-aspartate = N-carbamoyl-L-aspartate + phosphate + H(+). The protein operates within pyrimidine metabolism; UMP biosynthesis via de novo pathway; (S)-dihydroorotate from bicarbonate: step 2/3. Catalyzes the condensation of carbamoyl phosphate and aspartate to form carbamoyl aspartate and inorganic phosphate, the committed step in the de novo pyrimidine nucleotide biosynthesis pathway. The protein is Aspartate carbamoyltransferase catalytic subunit of Campylobacter jejuni subsp. jejuni serotype O:23/36 (strain 81-176).